A 2158-amino-acid chain; its full sequence is Non-reducing polyketide synthase Preu8 (2158 aa).

The tract at residues 4-241 (LVLGDQVADH…TPIPVFAPYH (238 aa)) is N-terminal acylcarrier protein transacylase domain (SAT). Positions 369–801 (NDKIAIVGMS…GGNTAIILED (433 aa)) constitute a Ketosynthase family 3 (KS3) domain. Catalysis depends on for beta-ketoacyl synthase activity residues cysteine 541, histidine 676, and histidine 719. Residues 900–1215 (FTFTGQGSQY…ANSVSTLFLA (316 aa)) are malonyl-CoA:ACP transacylase (MAT) domain. Serine 989 serves as the catalytic For acyl/malonyl transferase activity. Residues 1285–1603 (SCQRIVREEL…RRVLNIMMPP (319 aa)) form a product template (PT) domain region. Positions 1287–1423 (QRIVREELHA…GTVKYEDVSQ (137 aa)) are N-terminal hotdog fold. Residues 1287 to 1598 (QRIVREELHA…FQNIARRVLN (312 aa)) form the PKS/mFAS DH domain. Histidine 1319 (proton acceptor; for dehydratase activity) is an active-site residue. The tract at residues 1451–1598 (AHKVLRGMAY…FQNIARRVLN (148 aa)) is C-terminal hotdog fold. Aspartate 1511 (proton donor; for dehydratase activity) is an active-site residue. Over residues 1619 to 1639 (KKAASPTLAPAKAAKPAAKTS) the composition is skewed to low complexity. The tract at residues 1619–1654 (KKAASPTLAPAKAAKPAAKTSKPSKARAKPAADSTT) is disordered. The Carrier 1 domain occupies 1651 to 1725 (DSTTSRVMKI…QMKKFFSQYD (75 aa)). Serine 1685 carries the post-translational modification O-(pantetheine 4'-phosphoryl)serine. Residues 1723-1779 (QYDGAPIPDDGDDSDGTDEPSNFSTPSYGADNASTPPSSAPSVNGKSSPENHEVLES) form a disordered region. Residues 1731 to 1740 (DDGDDSDGTD) are compositionally biased toward acidic residues. Residues 1743–1770 (SNFSTPSYGADNASTPPSSAPSVNGKSS) are compositionally biased toward polar residues. Residues 1779–1853 (STEVSLARKI…DIENELGMRP (75 aa)) enclose the Carrier 2 domain. Serine 1813 carries the post-translational modification O-(pantetheine 4'-phosphoryl)serine. The disordered stretch occupies residues 1847–1879 (NELGMRPKPKPKAEAAPPKSSAKASPSANKQPQ). The segment covering 1860–1876 (EAAPPKSSAKASPSANK) has biased composition (low complexity). Residues 1894–2144 (SQYPPANSVL…NHFTMMKGDH (251 aa)) are thioesterase (TE) domain.

Requires pantetheine 4'-phosphate as cofactor.

Functionally, non-reducing polyketide synthase; part of a gene cluster that mediates the biosynthesis of a yet unidentified natural product. This Preussia isomera (Coprophilous fungus) protein is Non-reducing polyketide synthase Preu8.